An 82-amino-acid chain; its full sequence is Small ribosomal subunit protein bS20 (82 aa).

It belongs to the bacterial ribosomal protein bS20 family.

Functionally, binds directly to 16S ribosomal RNA. This Streptococcus pyogenes serotype M12 (strain MGAS2096) protein is Small ribosomal subunit protein bS20.